Consider the following 428-residue polypeptide: Enolase (428 aa).

Residue Gln-163 participates in (2R)-2-phosphoglycerate binding. Residue Glu-205 is the Proton donor of the active site. 3 residues coordinate Mg(2+): Asp-242, Glu-283, and Asp-310. Lys-335, Arg-364, Ser-365, and Lys-386 together coordinate (2R)-2-phosphoglycerate. Residue Lys-335 is the Proton acceptor of the active site.

This sequence belongs to the enolase family. Mg(2+) is required as a cofactor.

It is found in the cytoplasm. It localises to the secreted. The protein resides in the cell surface. The catalysed reaction is (2R)-2-phosphoglycerate = phosphoenolpyruvate + H2O. It participates in carbohydrate degradation; glycolysis; pyruvate from D-glyceraldehyde 3-phosphate: step 4/5. Its function is as follows. Catalyzes the reversible conversion of 2-phosphoglycerate (2-PG) into phosphoenolpyruvate (PEP). It is essential for the degradation of carbohydrates via glycolysis. This is Enolase from Saccharopolyspora erythraea (strain ATCC 11635 / DSM 40517 / JCM 4748 / NBRC 13426 / NCIMB 8594 / NRRL 2338).